The primary structure comprises 60 residues: Conotoxin Cal6.30 (60 aa).

The first 22 residues, 1-22, serve as a signal peptide directing secretion; the sequence is MKVTCVLTLAVLILTIGQIANA. 3 disulfide bridges follow: cysteine 31–cysteine 47, cysteine 38–cysteine 51, and cysteine 46–cysteine 55.

As to expression, expressed by the venom duct.

It is found in the secreted. In terms of biological role, probable neurotoxin. The polypeptide is Conotoxin Cal6.30 (Californiconus californicus (California cone)).